The sequence spans 190 residues: Xanthine phosphoribosyltransferase (190 aa).

Positions 20 and 27 each coordinate xanthine. 128-132 provides a ligand contact to 5-phospho-alpha-D-ribose 1-diphosphate; it reads ANGNA. A xanthine-binding site is contributed by Lys-156.

The protein belongs to the purine/pyrimidine phosphoribosyltransferase family. Xpt subfamily. As to quaternary structure, homodimer.

The protein localises to the cytoplasm. It catalyses the reaction XMP + diphosphate = xanthine + 5-phospho-alpha-D-ribose 1-diphosphate. It participates in purine metabolism; XMP biosynthesis via salvage pathway; XMP from xanthine: step 1/1. Its function is as follows. Converts the preformed base xanthine, a product of nucleic acid breakdown, to xanthosine 5'-monophosphate (XMP), so it can be reused for RNA or DNA synthesis. This is Xanthine phosphoribosyltransferase from Clostridium novyi (strain NT).